A 162-amino-acid chain; its full sequence is Single-stranded DNA-binding protein 1 (162 aa).

The SSB domain maps to 5–110; sequence LNKVMLIGHL…IVCTDMQMLG (106 aa). The interval 110–162 is disordered; that stretch reads GAKDSGGGTSDASYSQNRPSYSRPSRPEPSSGNYGASPSSGGAQEFEKDDLPF. Residues 122 to 140 are compositionally biased toward low complexity; that stretch reads SYSQNRPSYSRPSRPEPSS. Residues 141-151 are compositionally biased toward polar residues; sequence GNYGASPSSGG.

As to quaternary structure, homotetramer.

This is Single-stranded DNA-binding protein 1 (ssb1) from Chlorobaculum tepidum (strain ATCC 49652 / DSM 12025 / NBRC 103806 / TLS) (Chlorobium tepidum).